A 297-amino-acid polypeptide reads, in one-letter code: Formamidopyrimidine-DNA glycosylase (297 aa).

Pro2 acts as the Schiff-base intermediate with DNA in catalysis. Glu3 acts as the Proton donor in catalysis. Lys58 acts as the Proton donor; for beta-elimination activity in catalysis. DNA is bound by residues His106, Arg125, and Arg168. The FPG-type zinc-finger motif lies at 259–295 (RVYDREGLACTARGCRGVVRRVVQSGRSTFFCEVCQP). The active-site Proton donor; for delta-elimination activity is Arg285.

This sequence belongs to the FPG family. Monomer. Requires Zn(2+) as cofactor.

The catalysed reaction is Hydrolysis of DNA containing ring-opened 7-methylguanine residues, releasing 2,6-diamino-4-hydroxy-5-(N-methyl)formamidopyrimidine.. It carries out the reaction 2'-deoxyribonucleotide-(2'-deoxyribose 5'-phosphate)-2'-deoxyribonucleotide-DNA = a 3'-end 2'-deoxyribonucleotide-(2,3-dehydro-2,3-deoxyribose 5'-phosphate)-DNA + a 5'-end 5'-phospho-2'-deoxyribonucleoside-DNA + H(+). In terms of biological role, involved in base excision repair of DNA damaged by oxidation or by mutagenic agents. Acts as a DNA glycosylase that recognizes and removes damaged bases. Has a preference for oxidized purines, such as 7,8-dihydro-8-oxoguanine (8-oxoG). Has AP (apurinic/apyrimidinic) lyase activity and introduces nicks in the DNA strand. Cleaves the DNA backbone by beta-delta elimination to generate a single-strand break at the site of the removed base with both 3'- and 5'-phosphates. The polypeptide is Formamidopyrimidine-DNA glycosylase (Methylobacterium nodulans (strain LMG 21967 / CNCM I-2342 / ORS 2060)).